The chain runs to 442 residues: UPF0597 protein HRM2_02820 (442 aa).

It belongs to the UPF0597 family.

This is UPF0597 protein HRM2_02820 from Desulforapulum autotrophicum (strain ATCC 43914 / DSM 3382 / VKM B-1955 / HRM2) (Desulfobacterium autotrophicum).